Here is a 107-residue protein sequence, read N- to C-terminus: uncharacterized protein (107 aa).

Positions Phe-34–Tyr-107 form a coiled coil.

This is an uncharacterized protein from Dictyostelium discoideum (Social amoeba).